The primary structure comprises 262 residues: RNA-binding protein 7 (262 aa).

Position 2 is an N-acetylglycine (glycine 2). An RRM domain is found at arginine 10–glycine 87. ZCCHC8 binding regions lie at residues leucine 25 to proline 35 and histidine 59 to phenylalanine 76. The tract at residues valine 95–methionine 121 is disordered. Phosphoserine occurs at positions 133 and 134. Position 149 is an omega-N-methylarginine (arginine 149). 2 disordered regions span residues serine 159 to arginine 212 and serine 242 to histidine 262. Over residues serine 165–glutamine 194 the composition is skewed to polar residues. Serine 201 is modified (phosphoserine). The segment covering serine 242 to arginine 253 has biased composition (basic and acidic residues).

In terms of assembly, component of the nuclear exosome targeting (NEXT) complex composed of MTREX, ZCCHC8, and RBM7 that directs a subset of non-coding short-lived RNAs for exosomal degradation. Interacts with ZCCHC8 and SF3B2/SAP145. Binds to MTREX through ZCCHC8. Interacts with YWHAE and YWHAZ; these interactions are stress-dependent and RBM7 phosphorylation dependent; release RNA from the NEXT complex and may affect RNA targeting to the nuclear RNA exosomome for degradation. Interacts with MEPCE and LARP7, the core subunits of 7SK snRNP; upon genotoxic stress this interaction is enhanced, triggering the release of inactive P-TEFb complex from the core and P-TEFb complex activation. Post-translationally, phosphorylated at Ser-133 by MAPK14/p38-alpha-activated MAPKAPK2/MK2; this phosphorylation is stress-dependent; this phosphorylation decreases its RNA-binding capacity therefore affecting RNA nuclear exosome-mediated degradation. This phosphorylation mediates YWHAE and YWHAZ interactions.

The protein localises to the nucleus. The protein resides in the nucleoplasm. Functionally, RNA-binding subunit of the trimeric nuclear exosome targeting (NEXT) complex, a complex that functions as an RNA exosome cofactor that directs a subset of non-coding short-lived RNAs for exosomal degradation. NEXT is involved in surveillance and turnover of aberrant transcripts and non-coding RNAs. Binds preferentially polyuridine sequences and associates with newly synthesized RNAs, including pre-mRNAs and short-lived exosome substrates such as promoter upstream transcripts (PROMPTs), enhancer RNAs (eRNAs), and 3'-extended products from small nuclear RNAs (snRNAs). Participates in several biological processes including DNA damage response (DDR) and stress response. During stress response, activation of the p38MAPK-MK2 pathway decreases RBM7-RNA-binding and subsequently the RNA exosome degradation activities, thereby modulating the turnover of non-coding transcriptome. Participates in DNA damage response (DDR), through its interaction with MEPCE and LARP7, the core subunits of 7SK snRNP complex, that release the positive transcription elongation factor b (P-TEFb) complex from the 7SK snRNP. In turn, activation of P-TEFb complex induces the transcription of P-TEFb-dependent DDR genes to promote cell viability. This is RNA-binding protein 7 from Bos taurus (Bovine).